Consider the following 533-residue polypeptide: DNA-directed RNA polymerase III subunit RPC3 (533 aa).

Positions 161 to 183 (PLVPDTDSSDPGPPPPAPNLVIN) are disordered. S194 is subject to Phosphoserine. Positions 197 to 228 (GKGKRRRSSDEDAAGEPKAKKPRCTDNEEPTP) are disordered. Over residues 211–222 (GEPKAKKPRCTD) the composition is skewed to basic and acidic residues.

This sequence belongs to the eukaryotic RPC3/POLR3C RNA polymerase subunit family. As to quaternary structure, component of the RNA polymerase III complex consisting of 17 subunits: a ten-subunit horseshoe-shaped catalytic core composed of POLR3A/RPC1, POLR3B/RPC2, POLR1C/RPAC1, POLR1D/RPAC2, POLR3K/RPC10, POLR2E/RPABC1, POLR2F/RPABC2, POLR2H/RPABC3, POLR2K/RPABC4 and POLR2L/RPABC5; a mobile stalk composed of two subunits POLR3H/RPC8 and CRCP/RPC9, protruding from the core and functioning primarily in transcription initiation; and additional subunits homologous to general transcription factors of the RNA polymerase II machinery, POLR3C/RPC3-POLR3F/RPC6-POLR3G/RPC7 heterotrimer required for transcription initiation and POLR3D/RPC4-POLR3E/RPC5 heterodimer involved in both transcription initiation and termination. Directly interacts with POLR3G/RPC7 and POLR3GL. Directly interacts with POLR3F/RPC6. Interacts with GTF3C4. As part of the RNA polymerase III complex, interacts with PKP2.

The protein resides in the nucleus. Its function is as follows. DNA-dependent RNA polymerase catalyzes the transcription of DNA into RNA using the four ribonucleoside triphosphates as substrates. Specific peripheric component of RNA polymerase III (Pol III) which synthesizes small non-coding RNAs including 5S rRNA, snRNAs, tRNAs and miRNAs from at least 500 distinct genomic loci. Part of POLR3C/RPC3-POLR3F/RPC6-POLR3G/RPC7 heterotrimer, coordinates the dynamics of Pol III stalk and clamp modules during the transition from apo to elongation state. Pol III plays a key role in sensing and limiting infection by intracellular bacteria and DNA viruses. Acts as a nuclear and cytosolic DNA sensor involved in innate immune response. Can sense non-self dsDNA that serves as template for transcription into dsRNA. The non-self RNA polymerase III transcripts, such as Epstein-Barr virus-encoded RNAs (EBERs) induce type I interferon and NF-kappa-B through the RIG-I pathway. Preferentially binds single-stranded DNA (ssDNA) in a sequence-independent manner. The protein is DNA-directed RNA polymerase III subunit RPC3 of Rattus norvegicus (Rat).